Consider the following 529-residue polypeptide: Bifunctional purine biosynthesis protein PurH (529 aa).

One can recognise an MGS-like domain in the interval 1-148; it reads MQQRRPVRRA…KNHKDVAIVV (148 aa).

It belongs to the PurH family.

The catalysed reaction is (6R)-10-formyltetrahydrofolate + 5-amino-1-(5-phospho-beta-D-ribosyl)imidazole-4-carboxamide = 5-formamido-1-(5-phospho-D-ribosyl)imidazole-4-carboxamide + (6S)-5,6,7,8-tetrahydrofolate. It catalyses the reaction IMP + H2O = 5-formamido-1-(5-phospho-D-ribosyl)imidazole-4-carboxamide. Its pathway is purine metabolism; IMP biosynthesis via de novo pathway; 5-formamido-1-(5-phospho-D-ribosyl)imidazole-4-carboxamide from 5-amino-1-(5-phospho-D-ribosyl)imidazole-4-carboxamide (10-formyl THF route): step 1/1. It functions in the pathway purine metabolism; IMP biosynthesis via de novo pathway; IMP from 5-formamido-1-(5-phospho-D-ribosyl)imidazole-4-carboxamide: step 1/1. The polypeptide is Bifunctional purine biosynthesis protein PurH (Salmonella heidelberg (strain SL476)).